The primary structure comprises 123 residues: Holo-[acyl-carrier-protein] synthase (123 aa).

Residues Asp8 and Glu60 each contribute to the Mg(2+) site.

The protein belongs to the P-Pant transferase superfamily. AcpS family. Requires Mg(2+) as cofactor.

The protein resides in the cytoplasm. It carries out the reaction apo-[ACP] + CoA = holo-[ACP] + adenosine 3',5'-bisphosphate + H(+). Transfers the 4'-phosphopantetheine moiety from coenzyme A to a Ser of acyl-carrier-protein. This is Holo-[acyl-carrier-protein] synthase from Ehrlichia ruminantium (strain Welgevonden).